The primary structure comprises 412 residues: Serine hydroxymethyltransferase (412 aa).

Residues leucine 117 and 121-123 (GHL) each bind (6S)-5,6,7,8-tetrahydrofolate. The residue at position 226 (lysine 226) is an N6-(pyridoxal phosphate)lysine.

Belongs to the SHMT family. Homodimer. Requires pyridoxal 5'-phosphate as cofactor.

Its subcellular location is the cytoplasm. The catalysed reaction is (6R)-5,10-methylene-5,6,7,8-tetrahydrofolate + glycine + H2O = (6S)-5,6,7,8-tetrahydrofolate + L-serine. The protein operates within one-carbon metabolism; tetrahydrofolate interconversion. It participates in amino-acid biosynthesis; glycine biosynthesis; glycine from L-serine: step 1/1. Catalyzes the reversible interconversion of serine and glycine with tetrahydrofolate (THF) serving as the one-carbon carrier. This reaction serves as the major source of one-carbon groups required for the biosynthesis of purines, thymidylate, methionine, and other important biomolecules. Also exhibits THF-independent aldolase activity toward beta-hydroxyamino acids, producing glycine and aldehydes, via a retro-aldol mechanism. In Staphylococcus haemolyticus (strain JCSC1435), this protein is Serine hydroxymethyltransferase.